The primary structure comprises 273 residues: HTH-type transcriptional activator RhaS (273 aa).

The HTH araC/xylS-type domain maps to 174–272 (YQLLDWLQNN…SQSPRDLRSQ (99 aa)). 2 DNA-binding regions (H-T-H motif) span residues 191 to 212 (PELA…KNKT) and 239 to 262 (VTDI…KREF).

In terms of assembly, binds DNA as a dimer.

It localises to the cytoplasm. In terms of biological role, activates expression of the rhaBAD and rhaT operons. The protein is HTH-type transcriptional activator RhaS of Yersinia pseudotuberculosis serotype I (strain IP32953).